We begin with the raw amino-acid sequence, 160 residues long: Protein cornichon homolog 2 (160 aa).

Residues 1 to 10 (MAFTFAAFCY) lie on the Cytoplasmic side of the membrane. A helical transmembrane segment spans residues 11 to 31 (MLTLVLCASLIFFVIWHIIAF). Residues 32–72 (DELRTDFKNPIDQGNPARARERLKNIERICCLLRKLVVPEY) are Lumenal-facing. A helical transmembrane segment spans residues 73-93 (CIHGLFCLMFLCAAEWVTLGL). At 94 to 138 (NLPLLLYHLWRYFHRPSDGSEGLFDAVSIMDADILGYCQKEAWCK) the chain is on the cytoplasmic side. A helical membrane pass occupies residues 139–159 (LAFYLLSFFYYLYSMVYTLVS). F160 is a topological domain (lumenal).

It belongs to the cornichon family. In terms of assembly, interacts with HBEGF. In terms of tissue distribution, expressed in the odd-numbered neuromeres (r3 and r5) of the developing hindbrain.

It localises to the membrane. In terms of biological role, regulates the trafficking and gating properties of AMPA-selective glutamate receptors (AMPARs). Plays an important role in the proper development of cranial nerves by facilitating the secretion of HBEGF. The chain is Protein cornichon homolog 2 (CNIH2) from Gallus gallus (Chicken).